A 97-amino-acid polypeptide reads, in one-letter code: Co-chaperonin GroES (97 aa).

This sequence belongs to the GroES chaperonin family. Heptamer of 7 subunits arranged in a ring. Interacts with the chaperonin GroEL.

It localises to the cytoplasm. Together with the chaperonin GroEL, plays an essential role in assisting protein folding. The GroEL-GroES system forms a nano-cage that allows encapsulation of the non-native substrate proteins and provides a physical environment optimized to promote and accelerate protein folding. GroES binds to the apical surface of the GroEL ring, thereby capping the opening of the GroEL channel. This Blochmanniella floridana protein is Co-chaperonin GroES.